The primary structure comprises 418 residues: BTB and MATH domain-containing protein 41 (418 aa).

Residues 1 to 33 (MEINNGAQPENAAVSIPSRSPSGKSEKRKSPSI) are disordered. The MATH domain occupies 45-173 (SFTNYWSVER…NDILTIGCEL (129 aa)). In terms of domain architecture, BTB spans 232–293 (SDFIIVASCG…TLDVLLRHMY (62 aa)).

As to quaternary structure, interacts with cul-3.

The protein operates within protein modification; protein ubiquitination. Its function is as follows. Probable substrate-specific adapter of an E3 ubiquitin-protein ligase complex which mediates the ubiquitination and subsequent proteasomal degradation of target proteins. The sequence is that of BTB and MATH domain-containing protein 41 (bath-41) from Caenorhabditis elegans.